Here is a 252-residue protein sequence, read N- to C-terminus: Type III pantothenate kinase (252 aa).

6 to 13 serves as a coordination point for ATP; sequence DIGNTNIV. 107-110 contributes to the substrate binding site; sequence GADL. The active-site Proton acceptor is aspartate 109. Aspartate 129 is a K(+) binding site. Threonine 132 serves as a coordination point for ATP. Position 184 (threonine 184) interacts with substrate.

It belongs to the type III pantothenate kinase family. In terms of assembly, homodimer. It depends on NH4(+) as a cofactor. The cofactor is K(+).

Its subcellular location is the cytoplasm. It carries out the reaction (R)-pantothenate + ATP = (R)-4'-phosphopantothenate + ADP + H(+). Its pathway is cofactor biosynthesis; coenzyme A biosynthesis; CoA from (R)-pantothenate: step 1/5. Its function is as follows. Catalyzes the phosphorylation of pantothenate (Pan), the first step in CoA biosynthesis. In Bifidobacterium animalis subsp. lactis (strain AD011), this protein is Type III pantothenate kinase.